A 437-amino-acid polypeptide reads, in one-letter code: UDP-N-acetylmuramoylalanine--D-glutamate ligase (437 aa).

112–118 (GSNGKST) lines the ATP pocket.

It belongs to the MurCDEF family.

Its subcellular location is the cytoplasm. The catalysed reaction is UDP-N-acetyl-alpha-D-muramoyl-L-alanine + D-glutamate + ATP = UDP-N-acetyl-alpha-D-muramoyl-L-alanyl-D-glutamate + ADP + phosphate + H(+). Its pathway is cell wall biogenesis; peptidoglycan biosynthesis. In terms of biological role, cell wall formation. Catalyzes the addition of glutamate to the nucleotide precursor UDP-N-acetylmuramoyl-L-alanine (UMA). The sequence is that of UDP-N-acetylmuramoylalanine--D-glutamate ligase from Haemophilus influenzae (strain PittEE).